Here is a 343-residue protein sequence, read N- to C-terminus: MLASTFATHPAAAAAARRRGPIRWRLPFCSQIVTVTLRRRFPMARLSITNALASQSLESAPAAPPKHSFPILVNSCTGKMGKAVAEAAVSAGLQLVPVSFSAIEVPDGKVEICDREIYIRDPSEGESILPSIAKDYPDMIVVDYTVPDAVNANAELYCKLGLPFVMGTTGGNRQLLHKTVEDANVYAVISPQMGKQVVAFLAAMEIMAEQFPGAFSGYKLEVMESHQATKLDISGTAKAVISCFQKLGVSFNLNEVKQVRDPQEQLTLVGVPEEHLSGHAFHMYHLTSPDETVSFEFQHNVCGRSIYAEGTVDAALFLHKKIQSGANKKLYDMIDVLREGNMR.

The transit peptide at 1–14 (MLASTFATHPAAAA) directs the protein to the chloroplast. NAD(+) is bound by residues 167-169 (GTT) and 190-193 (SPQM). H226 serves as the catalytic Proton donor/acceptor. K230 acts as the Proton donor in catalysis. 235–236 (GT) lines the (S)-2,3,4,5-tetrahydrodipicolinate pocket.

The protein belongs to the DapB family.

The protein resides in the plastid. It localises to the chloroplast. It catalyses the reaction (S)-2,3,4,5-tetrahydrodipicolinate + NAD(+) + H2O = (2S,4S)-4-hydroxy-2,3,4,5-tetrahydrodipicolinate + NADH + H(+). The enzyme catalyses (S)-2,3,4,5-tetrahydrodipicolinate + NADP(+) + H2O = (2S,4S)-4-hydroxy-2,3,4,5-tetrahydrodipicolinate + NADPH + H(+). Its pathway is amino-acid biosynthesis; L-lysine biosynthesis via DAP pathway; (S)-tetrahydrodipicolinate from L-aspartate: step 4/4. Catalyzes the conversion of 4-hydroxy-tetrahydrodipicolinate (HTPA) to tetrahydrodipicolinate. This is Probable 4-hydroxy-tetrahydrodipicolinate reductase 1, chloroplastic (DAPB1) from Oryza sativa subsp. japonica (Rice).